A 286-amino-acid polypeptide reads, in one-letter code: Pyridoxal kinase PdxY (286 aa).

Substrate is bound by residues Ser9 and 44 to 45; that span reads TQ. Asp111, Glu148, and Lys181 together coordinate ATP. Asp222 serves as a coordination point for substrate.

It belongs to the pyridoxine kinase family. PdxY subfamily. Homodimer. The cofactor is Mg(2+).

The catalysed reaction is pyridoxal + ATP = pyridoxal 5'-phosphate + ADP + H(+). The protein operates within cofactor metabolism; pyridoxal 5'-phosphate salvage; pyridoxal 5'-phosphate from pyridoxal: step 1/1. In terms of biological role, pyridoxal kinase involved in the salvage pathway of pyridoxal 5'-phosphate (PLP). Catalyzes the phosphorylation of pyridoxal to PLP. This is Pyridoxal kinase PdxY from Pasteurella multocida (strain Pm70).